The sequence spans 389 residues: DEAD-box ATP-dependent RNA helicase CshC (389 aa).

A Q motif motif is present at residues 1–26; it reads MIKDMQPFLQQAWEKAGFKELTEIQK. Positions 29 to 199 constitute a Helicase ATP-binding domain; the sequence is IPTILEGQDV…RDLAVEPQLV (171 aa). 42 to 49 is an ATP binding site; it reads SPTGTGKT. Positions 147–150 match the DEAD box motif; the sequence is DEFD. One can recognise a Helicase C-terminal domain in the interval 209–379; sequence LVEHTYIICE…TKPKAPKKKK (171 aa). Positions 368–389 are disordered; sequence VETKPKAPKKKKPAFTGKKKPR. The span at 373–389 shows a compositional bias: basic residues; the sequence is KAPKKKKPAFTGKKKPR.

The catalysed reaction is ATP + H2O = ADP + phosphate + H(+). Its function is as follows. DEAD-box RNA helicase. Probably has an RNA-dependent ATPase activity and a 3' to 5' RNA helicase activity that uses the energy of ATP hydrolysis to destabilize and unwind short RNA duplexes. The sequence is that of DEAD-box ATP-dependent RNA helicase CshC (cshC) from Bacillus cereus (strain ATCC 14579 / DSM 31 / CCUG 7414 / JCM 2152 / NBRC 15305 / NCIMB 9373 / NCTC 2599 / NRRL B-3711).